A 323-amino-acid polypeptide reads, in one-letter code: NADH-cytochrome b5 reductase 2 (323 aa).

A helical membrane pass occupies residues 30 to 46 (LAPIYTAVGLTGLSVGL). Positions 72 to 177 (QGWVDLKLSE…KGPLPKYQWE (106 aa)) constitute an FAD-binding FR-type domain. 180–215 (KHEHIALIAGGTGITPMYQLIRQIFKNPDDKTKVTL) serves as a coordination point for FAD.

Belongs to the flavoprotein pyridine nucleotide cytochrome reductase family. The cofactor is FAD.

The protein resides in the mitochondrion outer membrane. The enzyme catalyses 2 Fe(III)-[cytochrome b5] + NADH = 2 Fe(II)-[cytochrome b5] + NAD(+) + H(+). In terms of biological role, may mediate the reduction of outer membrane cytochrome b5. This Aspergillus oryzae (strain ATCC 42149 / RIB 40) (Yellow koji mold) protein is NADH-cytochrome b5 reductase 2 (mcr1).